Consider the following 251-residue polypeptide: Probable transcriptional regulatory protein cbdbA400 (251 aa).

The protein belongs to the TACO1 family.

The protein localises to the cytoplasm. The chain is Probable transcriptional regulatory protein cbdbA400 from Dehalococcoides mccartyi (strain CBDB1).